Reading from the N-terminus, the 91-residue chain is DNA-directed RNA polymerase subunit omega (91 aa).

The protein belongs to the RNA polymerase subunit omega family. The RNAP catalytic core consists of 2 alpha, 1 beta, 1 beta' and 1 omega subunit. When a sigma factor is associated with the core the holoenzyme is formed, which can initiate transcription.

It carries out the reaction RNA(n) + a ribonucleoside 5'-triphosphate = RNA(n+1) + diphosphate. In terms of biological role, promotes RNA polymerase assembly. Latches the N- and C-terminal regions of the beta' subunit thereby facilitating its interaction with the beta and alpha subunits. The sequence is that of DNA-directed RNA polymerase subunit omega from Yersinia enterocolitica serotype O:8 / biotype 1B (strain NCTC 13174 / 8081).